The chain runs to 107 residues: Iron-sulfur cluster assembly protein CyaY (107 aa).

The protein belongs to the frataxin family.

In terms of biological role, involved in iron-sulfur (Fe-S) cluster assembly. May act as a regulator of Fe-S biogenesis. The polypeptide is Iron-sulfur cluster assembly protein CyaY (Thioalkalivibrio sulfidiphilus (strain HL-EbGR7)).